A 148-amino-acid polypeptide reads, in one-letter code: Large ribosomal subunit protein bL9 (148 aa).

This sequence belongs to the bacterial ribosomal protein bL9 family.

Binds to the 23S rRNA. The chain is Large ribosomal subunit protein bL9 from Listeria monocytogenes serotype 4a (strain HCC23).